The following is a 393-amino-acid chain: Mitogen-activated protein kinase SIPK (393 aa).

Residues Met-1–Met-11 are compositionally biased toward polar residues. Residues Met-1–Asp-31 form a disordered region. Residues Lys-60–Leu-345 enclose the Protein kinase domain. ATP is bound by residues Ile-66–Val-74 and Lys-89. Residue Asp-186 is the Proton acceptor of the active site. The TXY signature appears at Thr-218 to Tyr-220.

This sequence belongs to the protein kinase superfamily. CMGC Ser/Thr protein kinase family. MAP kinase subfamily. Interacts with SIPKK.

It catalyses the reaction L-tyrosyl-[protein] + ATP = O-phospho-L-tyrosyl-[protein] + ADP + H(+). It carries out the reaction L-seryl-[protein] + ATP = O-phospho-L-seryl-[protein] + ADP + H(+). The catalysed reaction is L-threonyl-[protein] + ATP = O-phospho-L-threonyl-[protein] + ADP + H(+). With respect to regulation, activated by threonine and tyrosine phosphorylation. In terms of biological role, phosphorylates myelin basic protein (MBP) in vitro. May be involved in disease resistance. In Nicotiana tabacum (Common tobacco), this protein is Mitogen-activated protein kinase SIPK.